Reading from the N-terminus, the 284-residue chain is Proteasome subunit beta 1 (284 aa).

Residues 1-54 constitute a propeptide, removed in mature form; by autocatalysis; sequence MAQRDTGGRLGAEFFTPGDSSFTAFLAAHRPALLSTRGLLPDGVRAAPDRVPHG. Thr-55 functions as the Nucleophile in the catalytic mechanism. Over residues 256 to 277 the composition is skewed to basic and acidic residues; sequence RLPESETEDLSREMVEQRHTRP. Positions 256-284 are disordered; it reads RLPESETEDLSREMVEQRHTRPDGPTAAM.

This sequence belongs to the peptidase T1B family. In terms of assembly, the 20S proteasome core is composed of 14 alpha and 14 beta subunits that assemble into four stacked heptameric rings, resulting in a barrel-shaped structure. The two inner rings, each composed of seven catalytic beta subunits, are sandwiched by two outer rings, each composed of seven alpha subunits. The catalytic chamber with the active sites is on the inside of the barrel. Has a gated structure, the ends of the cylinder being occluded by the N-termini of the alpha-subunits. Is capped by the proteasome-associated ATPase, ARC.

It localises to the cytoplasm. The enzyme catalyses Cleavage of peptide bonds with very broad specificity.. It functions in the pathway protein degradation; proteasomal Pup-dependent pathway. Its activity is regulated as follows. The formation of the proteasomal ATPase ARC-20S proteasome complex, likely via the docking of the C-termini of ARC into the intersubunit pockets in the alpha-rings, may trigger opening of the gate for substrate entry. Interconversion between the open-gate and close-gate conformations leads to a dynamic regulation of the 20S proteasome proteolysis activity. In terms of biological role, component of the proteasome core, a large protease complex with broad specificity involved in protein degradation. This Streptomyces avermitilis (strain ATCC 31267 / DSM 46492 / JCM 5070 / NBRC 14893 / NCIMB 12804 / NRRL 8165 / MA-4680) protein is Proteasome subunit beta 1.